The sequence spans 466 residues: Coagulation factor VII (466 aa).

Positions 1 to 20 are cleaved as a signal peptide; that stretch reads MVSQALRLLCLLLGLQGCLA. Residues 21–60 constitute a propeptide that is removed on maturation; sequence AGGVAEASGGETRDMPWKPGPHRVFITQEEAHGVLHRRRR. The Gla domain occupies 61–105; it reads ANAFLEELRPGSLERECKEEQCSFEEAREIFKDLERTKLFWISYS. Residues E66, E67, E74, E76, E79, E80, E85, E86, E89, and E95 each carry the 4-carboxyglutamate modification. C77 and C82 form a disulfide bridge. The EGF-like 1; calcium-binding domain occupies 106-142; that stretch reads DGDQCASSPCQNGGSCKDQLQSYICFCLPAFEGRNCE. Cystine bridges form between C110/C121, C115/C130, C132/C141, C151/C162, C158/C172, C174/C187, C195/C322, C219/C224, C238/C254, and C370/C389. Residue S112 is glycosylated (O-linked (Glc...) serine; alternate). A glycan (O-linked (Xyl...) serine; alternate) is linked at S112. S120 is a glycosylation site (O-linked (Fuc) serine). At D123 the chain carries (3R)-3-hydroxyaspartate. The EGF-like 2 domain maps to 147 to 188; that stretch reads DQLICVNENGGCEQYCSDHTGTKRSCRCHEGYSLLADGVSCT. The N-linked (GlcNAc...) asparagine glycan is linked to N205. The Peptidase S1 domain maps to 213 to 452; sequence IVGGKVCPKG…YIEWLQKLMR (240 aa). Catalysis depends on charge relay system residues H253 and D302. Residue N382 is glycosylated (N-linked (GlcNAc...) asparagine). D398 contacts substrate. The cysteines at positions 400 and 428 are disulfide-linked. The Charge relay system role is filled by S404.

The protein belongs to the peptidase S1 family. As to quaternary structure, heterodimer of a light chain and a heavy chain linked by a disulfide bond. The vitamin K-dependent, enzymatic carboxylation of some glutamate residues allows the modified protein to bind calcium. Post-translationally, the iron and 2-oxoglutarate dependent 3-hydroxylation of aspartate and asparagine is (R) stereospecific within EGF domains. In terms of processing, O-glycosylated. O-fucosylated by POFUT1 on a conserved serine or threonine residue found in the consensus sequence C2-X(4,5)-[S/T]-C3 of EGF domains, where C2 and C3 are the second and third conserved cysteines. Can be either O-glucosylated or O-xylosylated at Ser-112 by POGLUT1.

Its subcellular location is the secreted. It carries out the reaction Selective cleavage of Arg-|-Ile bond in factor X to form factor Xa.. Initiates the extrinsic pathway of blood coagulation. Serine protease that circulates in the blood in a zymogen form. Factor VII is converted to factor VIIa by factor Xa, factor XIIa, factor IXa, or thrombin by minor proteolysis. In the presence of tissue factor and calcium ions, factor VIIa then converts factor X to factor Xa by limited proteolysis. Factor VIIa also converts factor IX to factor IXa in the presence of tissue factor and calcium. The protein is Coagulation factor VII (F7) of Pan paniscus (Pygmy chimpanzee).